The sequence spans 168 residues: MISFIFAMDANRLIGKDNDLPWHLPNDLAYFKKITSGHSIIMGRKTFESIGRPLPNRKNIVVTSAPDSEFQGCTVVSSLKDVLDICSGPEECFVIGGAQLYTDLFPYADRLYMTKIHHEFEGDRHFPEFDESNWKLVSSEQGTKDEKNPYDYEFLMYEKKNSSKAGGF.

One can recognise a DHFR domain in the interval 1–159 (MISFIFAMDA…YDYEFLMYEK (159 aa)). Residue 5–7 (IFA) participates in substrate binding. NADP(+)-binding positions include 6 to 7 (FA) and 14 to 19 (IGKDND). D27 provides a ligand contact to substrate. An NADP(+)-binding site is contributed by 43–46 (GRKT). R57 serves as a coordination point for substrate. NADP(+) contacts are provided by residues 62 to 65 (VTSA) and 95 to 100 (IGGAQL). Residue T114 participates in substrate binding.

The protein belongs to the dihydrofolate reductase family.

The enzyme catalyses (6S)-5,6,7,8-tetrahydrofolate + NADP(+) = 7,8-dihydrofolate + NADPH + H(+). It participates in cofactor biosynthesis; tetrahydrofolate biosynthesis; 5,6,7,8-tetrahydrofolate from 7,8-dihydrofolate: step 1/1. In terms of biological role, key enzyme in folate metabolism. Catalyzes an essential reaction for de novo glycine and purine synthesis, and for DNA precursor synthesis. The protein is Dihydrofolate reductase (dfrA) of Bacillus subtilis (strain 168).